A 164-amino-acid polypeptide reads, in one-letter code: Sorting nexin-3 (164 aa).

A disordered region spans residues 1 to 26; sequence MSGKREFKSFGSTEETMFSQHHKIPS. Over residues 10-26 the composition is skewed to polar residues; it reads FGSTEETMFSQHHKIPS. One can recognise a PX domain in the interval 40-163; that stretch reads IEVRNPKTHV…IRFIEDDKFV (124 aa). Residues Arg83, Ser85, Lys114, Arg120, and Arg129 each coordinate a 1,2-diacyl-sn-glycero-3-phospho-(1D-myo-inositol-3-phosphate).

This sequence belongs to the sorting nexin family.

The protein localises to the cytoplasm. It is found in the golgi apparatus membrane. The protein resides in the prevacuolar compartment membrane. Functionally, required for retention of late Golgi membrane proteins. Component of the retrieval machinery that functions by direct interaction with the cytosolic tails of certain TGN membrane proteins during the sorting/budding process at the prevacuolar compartment. Binds phosphatidylinositol 3-phosphate (PtdIns(P3)). This Candida glabrata (strain ATCC 2001 / BCRC 20586 / JCM 3761 / NBRC 0622 / NRRL Y-65 / CBS 138) (Yeast) protein is Sorting nexin-3 (SNX3).